The sequence spans 241 residues: Large ribosomal subunit protein uL1 (241 aa).

This sequence belongs to the universal ribosomal protein uL1 family. Part of the 50S ribosomal subunit.

Its function is as follows. Binds directly to 23S rRNA. The L1 stalk is quite mobile in the ribosome, and is involved in E site tRNA release. In terms of biological role, protein L1 is also a translational repressor protein, it controls the translation of the L11 operon by binding to its mRNA. This Streptomyces avermitilis (strain ATCC 31267 / DSM 46492 / JCM 5070 / NBRC 14893 / NCIMB 12804 / NRRL 8165 / MA-4680) protein is Large ribosomal subunit protein uL1.